We begin with the raw amino-acid sequence, 419 residues long: MAPK/MAK/MRK overlapping kinase (419 aa).

The 282-residue stretch at 4–285 folds into the Protein kinase domain; the sequence is YKAIGKIGEG…AHQALQHPYF (282 aa). ATP-binding positions include 10–18 and lysine 33; that span reads IGEGTFSEV. Aspartate 128 serves as the catalytic Proton acceptor. Disordered stretches follow at residues 285–344 and 390–419; these read FQEQ…RGPA and PASK…KGGR. Basic and acidic residues-rich tracts occupy residues 322–338 and 393–402; these read KEGR…EDRP and KKTDPQKDLK.

It belongs to the protein kinase superfamily. CMGC Ser/Thr protein kinase family. CDC2/CDKX subfamily. The cofactor is Mg(2+). Autophosphorylated. Expressed in heart, brain, lung, kidney, and pancreas, and at very low levels in placenta, liver and skeletal muscle. Detected in retina.

The protein resides in the cytoplasm. It is found in the cell projection. Its subcellular location is the cilium. The protein localises to the nucleus. The enzyme catalyses L-seryl-[protein] + ATP = O-phospho-L-seryl-[protein] + ADP + H(+). It catalyses the reaction L-threonyl-[protein] + ATP = O-phospho-L-threonyl-[protein] + ADP + H(+). Phosphorylation appears to increase the enzymatic activity. Its function is as follows. Able to phosphorylate several exogenous substrates and to undergo autophosphorylation. Negatively regulates cilium length in a cAMP and mTORC1 signaling-dependent manner. This is MAPK/MAK/MRK overlapping kinase (MOK) from Homo sapiens (Human).